We begin with the raw amino-acid sequence, 421 residues long: Imidazolonepropionase (421 aa).

Residues histidine 81 and histidine 83 each coordinate Fe(3+). Residues histidine 81 and histidine 83 each coordinate Zn(2+). Residues arginine 90, tyrosine 153, and histidine 186 each coordinate 4-imidazolone-5-propanoate. Residue tyrosine 153 participates in N-formimidoyl-L-glutamate binding. Histidine 251 is a binding site for Fe(3+). Zn(2+) is bound at residue histidine 251. Glutamate 254 contacts 4-imidazolone-5-propanoate. Residue aspartate 326 participates in Fe(3+) binding. Aspartate 326 contacts Zn(2+). The N-formimidoyl-L-glutamate site is built by asparagine 328 and glycine 330. 4-imidazolone-5-propanoate is bound at residue serine 331.

This sequence belongs to the metallo-dependent hydrolases superfamily. HutI family. Zn(2+) serves as cofactor. The cofactor is Fe(3+).

It localises to the cytoplasm. The enzyme catalyses 4-imidazolone-5-propanoate + H2O = N-formimidoyl-L-glutamate. It functions in the pathway amino-acid degradation; L-histidine degradation into L-glutamate; N-formimidoyl-L-glutamate from L-histidine: step 3/3. Catalyzes the hydrolytic cleavage of the carbon-nitrogen bond in imidazolone-5-propanoate to yield N-formimidoyl-L-glutamate. It is the third step in the universal histidine degradation pathway. This Streptococcus pyogenes serotype M6 (strain ATCC BAA-946 / MGAS10394) protein is Imidazolonepropionase.